Reading from the N-terminus, the 346-residue chain is Ornithine carbamoyltransferase, catabolic (346 aa).

Carbamoyl phosphate contacts are provided by residues serine 58 to threonine 61, asparagine 85, arginine 109, and histidine 136 to glutamine 139. L-ornithine-binding positions include asparagine 168, aspartate 239, and serine 243–leucine 244. Carbamoyl phosphate-binding positions include cysteine 280 to leucine 281 and arginine 332.

The protein belongs to the aspartate/ornithine carbamoyltransferase superfamily. OTCase family.

The protein resides in the cytoplasm. It catalyses the reaction carbamoyl phosphate + L-ornithine = L-citrulline + phosphate + H(+). It participates in amino-acid degradation; L-arginine degradation via ADI pathway; carbamoyl phosphate from L-arginine: step 2/2. Reversibly catalyzes the transfer of the carbamoyl group from carbamoyl phosphate (CP) to the N(epsilon) atom of ornithine (ORN) to produce L-citrulline. The protein is Ornithine carbamoyltransferase, catabolic of Mycoplasma pneumoniae (strain ATCC 29342 / M129 / Subtype 1) (Mycoplasmoides pneumoniae).